We begin with the raw amino-acid sequence, 389 residues long: Gibberellin 20 oxidase 2 (389 aa).

A compositionally biased stretch (pro residues) spans Met1 to Met17. The disordered stretch occupies residues Met1–Ser23. Positions Asp224 to Pro324 constitute a Fe2OG dioxygenase domain. Fe cation contacts are provided by His249, Asp251, and His305. Residue Arg315 is part of the active site.

It belongs to the iron/ascorbate-dependent oxidoreductase family. GA20OX subfamily. It depends on Fe cation as a cofactor. L-ascorbate serves as cofactor.

It carries out the reaction gibberellin A12 + 2 2-oxoglutarate + 3 O2 + H(+) = gibberellin A9 + 2 succinate + 3 CO2 + 2 H2O. It catalyses the reaction gibberellin A53 + 2 2-oxoglutarate + 3 O2 + H(+) = gibberellin A20 + 2 succinate + 3 CO2 + 2 H2O. Key oxidase enzyme in the biosynthesis of gibberellin that catalyzes the conversion of GA53 to GA20 via a three-step oxidation at C-20 of the GA skeleton. This Oryza sativa subsp. indica (Rice) protein is Gibberellin 20 oxidase 2 (20ox2).